Consider the following 332-residue polypeptide: Acetyl-coenzyme A carboxylase carboxyl transferase subunit alpha (332 aa).

The region spanning 44–298 (QLESRAQNLR…KETLVNNLEE (255 aa)) is the CoA carboxyltransferase C-terminal domain.

This sequence belongs to the AccA family. Acetyl-CoA carboxylase is a heterohexamer composed of biotin carboxyl carrier protein (AccB), biotin carboxylase (AccC) and two subunits each of ACCase subunit alpha (AccA) and ACCase subunit beta (AccD).

The protein localises to the cytoplasm. The enzyme catalyses N(6)-carboxybiotinyl-L-lysyl-[protein] + acetyl-CoA = N(6)-biotinyl-L-lysyl-[protein] + malonyl-CoA. The protein operates within lipid metabolism; malonyl-CoA biosynthesis; malonyl-CoA from acetyl-CoA: step 1/1. In terms of biological role, component of the acetyl coenzyme A carboxylase (ACC) complex. First, biotin carboxylase catalyzes the carboxylation of biotin on its carrier protein (BCCP) and then the CO(2) group is transferred by the carboxyltransferase to acetyl-CoA to form malonyl-CoA. In Crocosphaera subtropica (strain ATCC 51142 / BH68) (Cyanothece sp. (strain ATCC 51142)), this protein is Acetyl-coenzyme A carboxylase carboxyl transferase subunit alpha.